Consider the following 291-residue polypeptide: Oxidative stress-responsive serine-rich protein 1 (291 aa).

Residues 48–174 (EDAKPKSACA…SSDAPQVSQA (127 aa)) form a disordered region. Positions 65–83 (STRKSSRGAVRTQRRRRSK) are enriched in basic residues. Polar residues predominate over residues 132 to 142 (ECSSSLDTNHT). Phosphothreonine is present on residues T142 and T232.

The chain is Oxidative stress-responsive serine-rich protein 1 (OSER1) from Bos taurus (Bovine).